The following is a 199-amino-acid chain: MEPLKTHNGIAAVLNRINVDTDQIIPKQFLKRIERTGYGRFAFFDWRYLDNGDPNPDFELNRPEYKGASILIAGENFGCGSSREHAPWALDDYGFKIIIAPSFADIFHQNCFKNGMLPIRLPYEAWKELAEQYEYQSLTMTVDLEKQTITDHAGRQIAFEVDPHWKEMLLNGYDEISLTLLLEEEIEQFEKQRSSWLQA.

Belongs to the LeuD family. LeuD type 1 subfamily. As to quaternary structure, heterodimer of LeuC and LeuD.

The catalysed reaction is (2R,3S)-3-isopropylmalate = (2S)-2-isopropylmalate. It participates in amino-acid biosynthesis; L-leucine biosynthesis; L-leucine from 3-methyl-2-oxobutanoate: step 2/4. Functionally, catalyzes the isomerization between 2-isopropylmalate and 3-isopropylmalate, via the formation of 2-isopropylmaleate. This chain is 3-isopropylmalate dehydratase small subunit, found in Bacillus licheniformis (strain ATCC 14580 / DSM 13 / JCM 2505 / CCUG 7422 / NBRC 12200 / NCIMB 9375 / NCTC 10341 / NRRL NRS-1264 / Gibson 46).